The chain runs to 179 residues: Large ribosomal subunit protein uL5 (179 aa).

This sequence belongs to the universal ribosomal protein uL5 family. As to quaternary structure, part of the 50S ribosomal subunit; part of the 5S rRNA/L5/L18/L25 subcomplex. Contacts the 5S rRNA and the P site tRNA. Forms a bridge to the 30S subunit in the 70S ribosome.

In terms of biological role, this is one of the proteins that bind and probably mediate the attachment of the 5S RNA into the large ribosomal subunit, where it forms part of the central protuberance. In the 70S ribosome it contacts protein S13 of the 30S subunit (bridge B1b), connecting the 2 subunits; this bridge is implicated in subunit movement. Contacts the P site tRNA; the 5S rRNA and some of its associated proteins might help stabilize positioning of ribosome-bound tRNAs. The polypeptide is Large ribosomal subunit protein uL5 (Rickettsia akari (strain Hartford)).